A 324-amino-acid polypeptide reads, in one-letter code: D-alanine--D-alanine ligase (324 aa).

Positions 120–322 constitute an ATP-grasp domain; the sequence is NNYLRGFGVE…LKEILTEIIE (203 aa). Position 149–204 (149–204) interacts with ATP; sequence IDKLGLPLIVKPNDGGSSFGVTKVTNITQIQLAIRNAFNEGEGVLIESFIPGTEIT. Mg(2+) contacts are provided by Asp-276, Glu-289, and Asn-291.

Belongs to the D-alanine--D-alanine ligase family. The cofactor is Mg(2+). Mn(2+) serves as cofactor.

It is found in the cytoplasm. It carries out the reaction 2 D-alanine + ATP = D-alanyl-D-alanine + ADP + phosphate + H(+). Its pathway is cell wall biogenesis; peptidoglycan biosynthesis. Its function is as follows. Cell wall formation. The polypeptide is D-alanine--D-alanine ligase (Azobacteroides pseudotrichonymphae genomovar. CFP2).